Here is a 529-residue protein sequence, read N- to C-terminus: Methionine--tRNA ligase (529 aa).

The short motif at 12 to 22 is the 'HIGH' region element; that stretch reads YYVNALPHIGS. Cys127, Cys130, Cys145, and His148 together coordinate Zn(2+). Residues 301–305 carry the 'KMSKS' region motif; the sequence is KMGKS. An ATP-binding site is contributed by Lys304.

The protein belongs to the class-I aminoacyl-tRNA synthetase family. MetG type 2A subfamily. Monomer. The cofactor is Zn(2+).

It is found in the cytoplasm. The enzyme catalyses tRNA(Met) + L-methionine + ATP = L-methionyl-tRNA(Met) + AMP + diphosphate. Is required not only for elongation of protein synthesis but also for the initiation of all mRNA translation through initiator tRNA(fMet) aminoacylation. This is Methionine--tRNA ligase from Thermosynechococcus vestitus (strain NIES-2133 / IAM M-273 / BP-1).